A 145-amino-acid chain; its full sequence is Putative pre-16S rRNA nuclease (145 aa).

The protein belongs to the YqgF nuclease family.

It localises to the cytoplasm. Could be a nuclease involved in processing of the 5'-end of pre-16S rRNA. The sequence is that of Putative pre-16S rRNA nuclease from Prochlorococcus marinus (strain MIT 9211).